The sequence spans 1150 residues: Rho-type GTPase-activating protein 1 (1150 aa).

Residues 1-10 (MSQRDAKKDG) show a composition bias toward basic and acidic residues. A disordered region spans residues 1-78 (MSQRDAKKDG…AESRKALPNQ (78 aa)). A compositionally biased stretch (polar residues) spans 40-62 (TTKNFPHSRHTSTVAGTEGGSSL). 3 LIM zinc-binding domains span residues 114 to 177 (KICA…RRLD), 178 to 238 (LLCA…LFAA), and 483 to 546 (DLCY…SSNV). The disordered stretch occupies residues 586-683 (SQRKPLSVDP…SHGGSITGKS (98 aa)). Over residues 598–617 (ENVSSTVETAKQAETTASSD) the composition is skewed to polar residues. Residues 642 to 655 (SNETQSSSNSTETS) are compositionally biased toward low complexity. Position 690 is a phosphoserine (Ser690). A disordered region spans residues 726 to 759 (AFRHMPSYTDPSYRKNSGAIYDKNDGTQKGLTPK). In terms of domain architecture, Rho-GAP spans 837–1038 (VPLEILVERN…LLIENFEKFC (202 aa)). Disordered stretches follow at residues 1078–1097 (LDER…RQPI) and 1104–1150 (LTSD…IRDS). The segment covering 1088–1097 (ASTKRKRQPI) has biased composition (basic residues). The span at 1104 to 1134 (LTSDVPSGSEVADTNSLSSTTKDEASPNSDA) shows a compositional bias: polar residues.

The protein resides in the cell tip. Its subcellular location is the nucleus. Its function is as follows. GTPase-activating protein for Rho1. Involved in the F-actin patch localization, cell morphogenesis, regulation of septation, and cell wall synthesis. This chain is Rho-type GTPase-activating protein 1 (rga1), found in Schizosaccharomyces pombe (strain 972 / ATCC 24843) (Fission yeast).